We begin with the raw amino-acid sequence, 147 residues long: Cyanate hydratase (147 aa).

Catalysis depends on residues R88, E91, and S114.

It belongs to the cyanase family.

The catalysed reaction is cyanate + hydrogencarbonate + 3 H(+) = NH4(+) + 2 CO2. In terms of biological role, catalyzes the reaction of cyanate with bicarbonate to produce ammonia and carbon dioxide. In Polynucleobacter asymbioticus (strain DSM 18221 / CIP 109841 / QLW-P1DMWA-1) (Polynucleobacter necessarius subsp. asymbioticus), this protein is Cyanate hydratase.